Reading from the N-terminus, the 498-residue chain is Oligopeptide transport system permease protein AmiC (498 aa).

6 consecutive transmembrane segments (helical) span residues 12 to 32, 279 to 299, 316 to 336, 359 to 379, 415 to 435, and 461 to 481; these read SLVSIFLVTTLTYTIIYTLVP, MIVSSAITGLIGLVLAYALAV, LSTGALTFLLALPTIALVYIV, SYVLPAVILGLLGAPGTAIWI, MVPLVSGIPAAIIGVIGGATL, and VVGLVFIFTCISIFSRLLGDI. In terms of domain architecture, ABC transmembrane type-1 spans 280–479; that stretch reads IVSSAITGLI…CISIFSRLLG (200 aa).

This sequence belongs to the binding-protein-dependent transport system permease family. OppBC subfamily.

The protein localises to the cell membrane. In terms of biological role, part of the binding-protein-dependent transport system for oligopeptides; probably responsible for the translocation of the substrate across the membrane. In Streptococcus pneumoniae serotype 4 (strain ATCC BAA-334 / TIGR4), this protein is Oligopeptide transport system permease protein AmiC (amiC).